Consider the following 220-residue polypeptide: Large ribosomal subunit protein uL4 (220 aa).

Residues 45-102 (AARQGTHKTKTRGEVRGGGRKPFRQKGTGRARQGSIRAPHYTGGGTVHGPVPRDYSQR) are disordered. Residues 62 to 73 (GGRKPFRQKGTG) are compositionally biased toward basic residues.

It belongs to the universal ribosomal protein uL4 family. As to quaternary structure, part of the 50S ribosomal subunit.

Functionally, one of the primary rRNA binding proteins, this protein initially binds near the 5'-end of the 23S rRNA. It is important during the early stages of 50S assembly. It makes multiple contacts with different domains of the 23S rRNA in the assembled 50S subunit and ribosome. In terms of biological role, forms part of the polypeptide exit tunnel. This Corynebacterium aurimucosum (strain ATCC 700975 / DSM 44827 / CIP 107346 / CN-1) (Corynebacterium nigricans) protein is Large ribosomal subunit protein uL4.